Consider the following 298-residue polypeptide: Distal tail protein (298 aa).

It belongs to the skunalikevirus distal tail protein family. Homohexamer. Interacts with the receptor binding protein.

It localises to the virion. In terms of biological role, forms the distal part of the tail. Self-associates as two rings organized back to back, with a central channel allowing DNA ejection. In Lactococcus phage SK1 (Lactococcus lactis bacteriophage SK1), this protein is Distal tail protein.